The following is a 132-amino-acid chain: Phosphoribosyl-AMP cyclohydrolase (132 aa).

Asp-86 contributes to the Mg(2+) binding site. Cys-87 is a binding site for Zn(2+). 2 residues coordinate Mg(2+): Asp-88 and Asp-90. Zn(2+) is bound by residues Cys-103 and Cys-110.

It belongs to the PRA-CH family. As to quaternary structure, homodimer. Requires Mg(2+) as cofactor. It depends on Zn(2+) as a cofactor.

It localises to the cytoplasm. It catalyses the reaction 1-(5-phospho-beta-D-ribosyl)-5'-AMP + H2O = 1-(5-phospho-beta-D-ribosyl)-5-[(5-phospho-beta-D-ribosylamino)methylideneamino]imidazole-4-carboxamide. The protein operates within amino-acid biosynthesis; L-histidine biosynthesis; L-histidine from 5-phospho-alpha-D-ribose 1-diphosphate: step 3/9. In terms of biological role, catalyzes the hydrolysis of the adenine ring of phosphoribosyl-AMP. The sequence is that of Phosphoribosyl-AMP cyclohydrolase from Haloquadratum walsbyi (strain DSM 16790 / HBSQ001).